Reading from the N-terminus, the 386-residue chain is Zinc finger CCCH domain-containing protein 2 (386 aa).

C3H1-type zinc fingers lie at residues 116 to 143 (HYSGTACPDFRKGGCKRGDACEYAHGVF) and 151 to 175 (RYRTQPCKDGTACRRRVCFFAHTPD). Disordered stretches follow at residues 180–200 (LPAQQSSPRSVASSPLAESYD) and 220–252 (SSPTSTLMSPPKSPPSESPPLSPDGAAAIRRGS). Over residues 182-192 (AQQSSPRSVAS) the composition is skewed to polar residues. The span at 220-229 (SSPTSTLMSP) shows a compositional bias: low complexity. Positions 230-241 (PKSPPSESPPLS) are enriched in pro residues.

It is found in the nucleus. Functionally, involved in leaf senescence delay. May repress jasmonic acid (JA) signaling role in promoting leaf senescence. May regulate panicle development and pollination/fertilization process. This Oryza sativa subsp. japonica (Rice) protein is Zinc finger CCCH domain-containing protein 2.